Here is a 415-residue protein sequence, read N- to C-terminus: Camphor 5-monooxygenase (415 aa).

Cys358 is a heme binding site.

Belongs to the cytochrome P450 family. Requires heme as cofactor.

Its subcellular location is the cytoplasm. It catalyses the reaction 2 reduced [2Fe-2S]-[putidaredoxin] + (1R,4R)-camphor + O2 + 2 H(+) = (1R,4R,5R)-5-hydroxycamphor + 2 oxidized [2Fe-2S]-[putidaredoxin] + H2O. The protein operates within terpene metabolism; (R)-camphor degradation. In terms of biological role, involved in a camphor oxidation system. This Pseudomonas putida (Arthrobacter siderocapsulatus) protein is Camphor 5-monooxygenase (camC).